Here is a 722-residue protein sequence, read N- to C-terminus: Dynein axonemal intermediate chain 7 (722 aa).

A compositionally biased stretch (basic residues) spans 1–15 (MGPKAKKSGSKKKKV). The segment at 1 to 20 (MGPKAKKSGSKKKKVTKAER) is disordered.

The protein belongs to the DNAI7 family. As to quaternary structure, part of the multisubunit axonemal dynein complex formed at least of two heavy chains and a number of intermediate and light chains. Associates with tubulin. Interacts with microtubule. In terms of processing, ubiquitinated. Ubiquitination leads to its degradation through the 26S proteasome. Ubiquitin-proteasome-mediated DNAI7 degradation occurs in mitosis.

It is found in the cell projection. The protein resides in the cilium. The protein localises to the cytoplasm. Functionally, via its association with the multisubunit axonemal dynein complex, is potentially involved in the regulation of cilia function. May act as a cell cycle regulator. This is Dynein axonemal intermediate chain 7 from Macaca fascicularis (Crab-eating macaque).